Consider the following 1724-residue polypeptide: Protein mono-ADP-ribosyltransferase PARP4 (1724 aa).

The 94-residue stretch at 1–94 folds into the BRCT domain; that stretch reads MVMGIFANCI…RLLDVKNYDP (94 aa). A Nuclear localization signal motif is present at residues 19-25; sequence PQQQKKK. The interval 97–123 is disordered; sequence PLDITPPPDQKASSSEVKTEGLCPDSA. A phosphothreonine mark is found at threonine 101 and threonine 333. One can recognise a PARP alpha-helical domain in the interval 242–370; that stretch reads SEQLQALLLE…ETNLSKPNPP (129 aa). A PARP catalytic domain is found at 369 to 573; it reads PPSLAKYRAL…FSMPGDQIKD (205 aa). The 129-residue stretch at 607–735 folds into the VIT domain; it reads SSTKAGLQDA…KVLIKITYIT (129 aa). Positions 876–1046 constitute a VWFA domain; the sequence is EVIICLDCSS…KQIEDQMTRL (171 aa). Serine 1236 is modified (phosphoserine). A Nuclear localization signal motif is present at residues 1237–1249; it reads KRKHRKIPFSKRK. Serine 1335 is subject to Phosphoserine. The disordered stretch occupies residues 1408–1452; it reads SAQSAPLQHPGGFTTRPSAGTFPELDSPQLHFSLPTDPDPIRGFG. Arginine 1476 is modified (asymmetric dimethylarginine). Residue serine 1504 is modified to Phosphoserine. Residues 1562 to 1724 are interaction with the major vault protein; the sequence is VCIQHWQDAV…LHRVLHYSQG (163 aa).

Belongs to the ARTD/PARP family. As to quaternary structure, component of the vault ribonucleoprotein particle, at least composed of MVP, PARP4 and one or more vault RNAs (vRNAs). Interacts with TEP1. Widely expressed; the highest levels are in the kidney; also detected in heart, placenta, lung, liver, skeletal muscle, spleen, leukocytes and pancreas.

It is found in the cytoplasm. The protein localises to the nucleus. It localises to the cytoskeleton. The protein resides in the spindle. The enzyme catalyses L-aspartyl-[protein] + NAD(+) = 4-O-(ADP-D-ribosyl)-L-aspartyl-[protein] + nicotinamide. The catalysed reaction is L-glutamyl-[protein] + NAD(+) = 5-O-(ADP-D-ribosyl)-L-glutamyl-[protein] + nicotinamide. Mono-ADP-ribosyltransferase that mediates mono-ADP-ribosylation of target proteins. The protein is Protein mono-ADP-ribosyltransferase PARP4 of Homo sapiens (Human).